A 508-amino-acid polypeptide reads, in one-letter code: Aspartyl/glutamyl-tRNA(Asn/Gln) amidotransferase subunit B (508 aa).

This sequence belongs to the GatB/GatE family. GatB subfamily. In terms of assembly, heterotrimer of A, B and C subunits.

It carries out the reaction L-glutamyl-tRNA(Gln) + L-glutamine + ATP + H2O = L-glutaminyl-tRNA(Gln) + L-glutamate + ADP + phosphate + H(+). It catalyses the reaction L-aspartyl-tRNA(Asn) + L-glutamine + ATP + H2O = L-asparaginyl-tRNA(Asn) + L-glutamate + ADP + phosphate + 2 H(+). Its function is as follows. Allows the formation of correctly charged Asn-tRNA(Asn) or Gln-tRNA(Gln) through the transamidation of misacylated Asp-tRNA(Asn) or Glu-tRNA(Gln) in organisms which lack either or both of asparaginyl-tRNA or glutaminyl-tRNA synthetases. The reaction takes place in the presence of glutamine and ATP through an activated phospho-Asp-tRNA(Asn) or phospho-Glu-tRNA(Gln). The chain is Aspartyl/glutamyl-tRNA(Asn/Gln) amidotransferase subunit B from Salinibacter ruber (strain DSM 13855 / M31).